Consider the following 474-residue polypeptide: MTKKLHIKTWGCQMNEYDSSKMADLLDATHGYQLTDVAEEADVLLLNTCSIREKAQEKVFHQLGRWKLLKEKNPDLIIGVGGCVASQEGEHIRQRAHYVDIIFGPQTLHRLPEMINSVRGDRSPVVDISFPEIEKFDRLPEPRAEGPTAFVSIMEGCNKYCTYCVVPYTRGEEVSRPSDDILFEIAQLAAQGVREVNLLGQNVNAWRGENYDGTTGSFADLLRLVAAIDGIDRIRFTTSHPIEFTDDIIEVYRDTPELVSFLHLPVQSGSDRILNLMGRTHTALEYKAIIRKLRAARPDIQISSDFIVGFPGETTEDFEKTMKLIADVNFDMSYSFIFSARPGTPAADMVDDVPEEEKKQRLYILQERINQQAMAWSRRMLGTTQRILVEGTSRKSIMELSGRTENNRVVNFEGTPDMIGKFVDVEITDVYPNSLRGKVVRTEDEMGLRVAETPESVIARTRKENDLGVGYYQP.

An MTTase N-terminal domain is found at K3 to G120. The [4Fe-4S] cluster site is built by C12, C49, C83, C157, C161, and C164. The 233-residue stretch at R143–A375 folds into the Radical SAM core domain. Positions R378–R441 constitute a TRAM domain.

It belongs to the methylthiotransferase family. MiaB subfamily. In terms of assembly, monomer. [4Fe-4S] cluster is required as a cofactor.

It localises to the cytoplasm. It catalyses the reaction N(6)-dimethylallyladenosine(37) in tRNA + (sulfur carrier)-SH + AH2 + 2 S-adenosyl-L-methionine = 2-methylsulfanyl-N(6)-dimethylallyladenosine(37) in tRNA + (sulfur carrier)-H + 5'-deoxyadenosine + L-methionine + A + S-adenosyl-L-homocysteine + 2 H(+). Catalyzes the methylthiolation of N6-(dimethylallyl)adenosine (i(6)A), leading to the formation of 2-methylthio-N6-(dimethylallyl)adenosine (ms(2)i(6)A) at position 37 in tRNAs that read codons beginning with uridine. The protein is tRNA-2-methylthio-N(6)-dimethylallyladenosine synthase of Escherichia coli (strain SMS-3-5 / SECEC).